Reading from the N-terminus, the 77-residue chain is UPF0291 protein BLi02035/BL02933 (77 aa).

Positions 57–77 (PEGNDVTPEKLKQEKRNRRLH) are disordered.

This sequence belongs to the UPF0291 family.

The protein resides in the cytoplasm. The protein is UPF0291 protein BLi02035/BL02933 of Bacillus licheniformis (strain ATCC 14580 / DSM 13 / JCM 2505 / CCUG 7422 / NBRC 12200 / NCIMB 9375 / NCTC 10341 / NRRL NRS-1264 / Gibson 46).